The primary structure comprises 405 residues: MTNSEQNPPSEENVQVASTGEIESNYDEIVECFEALNLEGDLLRGIFAYGFEKPSAIQQRGIKPILDGYDTIGQAQSGTGKTATFVIAALQKIDYSLNACQVLLLAPTRELAQQIQKVALALGDYCELRCHACVGGTSVRDDMNKLKSGVHMVVGTPGRVFDMLDKGYLRVDNLKLFILDEADEMLSRGFKVQIHDIFKKLPQDVQVALFSATMPNEILHLTTQFMRDPKRILVKQEELTLEGIRQFYVGVEKDEWKMDTLIDLYETLTIVQAIIYCNTRRRVDQLTKQMRERDFTCSSMHGDMDQKDREVIMRQFRSGSSRVLITTDLLARGIDVQQVSLVINYDLPVSPETYIHRIGRSGRFGKKGVSINFVTDDDIVCLRDIERHYNTQIEEMPMGITDILQ.

Residues 31 to 59 carry the Q motif motif; it reads ECFEALNLEGDLLRGIFAYGFEKPSAIQQ. Positions 62-232 constitute a Helicase ATP-binding domain; sequence IKPILDGYDT…TQFMRDPKRI (171 aa). 75–82 is a binding site for ATP; it reads AQSGTGKT. Positions 180–183 match the DEAD box motif; sequence DEAD. The Helicase C-terminal domain maps to 243-404; that stretch reads GIRQFYVGVE…EMPMGITDIL (162 aa).

This sequence belongs to the DEAD box helicase family. eIF4A subfamily. EIF4F is a multi-subunit complex, the composition of which varies with external and internal environmental conditions. It is composed of at least EIF4A, EIF4E and EIF4G.

It catalyses the reaction ATP + H2O = ADP + phosphate + H(+). Its function is as follows. ATP-dependent RNA helicase which is a subunit of the eIF4F complex involved in cap recognition and is required for mRNA binding to ribosome. In the current model of translation initiation, eIF4A unwinds RNA secondary structures in the 5'-UTR of mRNAs which is necessary to allow efficient binding of the small ribosomal subunit, and subsequent scanning for the initiator codon. This chain is Eukaryotic initiation factor 4A (EIF4-A), found in Cryptosporidium parvum.